The sequence spans 84 residues: Small ribosomal subunit protein uS17 (84 aa).

It belongs to the universal ribosomal protein uS17 family. Part of the 30S ribosomal subunit.

In terms of biological role, one of the primary rRNA binding proteins, it binds specifically to the 5'-end of 16S ribosomal RNA. In Erwinia tasmaniensis (strain DSM 17950 / CFBP 7177 / CIP 109463 / NCPPB 4357 / Et1/99), this protein is Small ribosomal subunit protein uS17.